A 598-amino-acid chain; its full sequence is MPCIQAQYGTPAPSPGPRDHLASDPLTPELSKPTMDLASPEAAPTAPTALPSFSTFMDGYTGEFDTFLYQLPGTAQPCSSASSSASSTSSSSATSPASASFKFEDFQVYGCYPGPLSGPLDETLSSSGSDYYGSPCSAPSPSTPSFQPPQLSPWDGSFGPFSPSQTYEGLRAWTEQLPKASGHPQPPAFFSFSPPTGPSPSLAQSPLKLFPSQATCQLGERESYSISTAFPGLAPTSPHLDGPGMLDAPVPSAKARSGAPSGSEGRCAVCGDNASCQHYGVRTCEGCKGFFKRTVQKNAKYICLANKDCPVDKRRRNRCQFCRFQKCLAVGMVKEVVRTDSLKGRRGRLPSKPKQPPDASPANLLTSLVRAHLDSGPSTAKLDYSKFQELVLPHFGKEDAGDVQQFYDLLSGSLEVIRKWAEKIPGFAELSPGDQDLLLESAFLELFILRLAYRSKPAEGKLIFCSGLVLHRLQCARGFGDWIDSILAFSRSLHGLVVDVPAFACLSALVLITDRHGLQEPRRVEELQNRIASCLKEHVSAVAGEPQPASCLSRLLGKLPELRTLCTQGLQRIFYLKLEDLVPPPPIVDKIFMDTLPF.

2 disordered regions span residues 1-50 and 120-159; these read MPCI…PTAL and LDET…GSFG. Low complexity-rich tracts occupy residues 37–50 and 134–145; these read LASP…PTAL and SPCSAPSPSTPS. Residues 171-466 are required for nuclear import; the sequence is RAWTEQLPKA…PAEGKLIFCS (296 aa). A DNA-binding region (nuclear receptor) is located at residues 264 to 339; sequence EGRCAVCGDN…VGMVKEVVRT (76 aa). NR C4-type zinc fingers lie at residues 267–287 and 303–327; these read CAVC…CEGC and CLAN…FQKC. The required for binding NBRE-containing DNA stretch occupies residues 268–354; the sequence is AVCGDNASCQ…RRGRLPSKPK (87 aa). The tract at residues 299-361 is required for the interaction with RXRA; it reads AKYICLANKD…KPKQPPDASP (63 aa). A Phosphoserine; by PKA modification is found at S341. The interval 341 to 361 is disordered; the sequence is SLKGRRGRLPSKPKQPPDASP. At S351 the chain carries Phosphoserine; by PKA, RPS6KA1 and RPS6KA3. The region spanning 360–595 is the NR LBD domain; that stretch reads SPANLLTSLV…PIVDKIFMDT (236 aa). The interval 521-544 is binds lipopolysaccharide; it reads PRRVEELQNRIASCLKEHVSAVAG. The interval 584-595 is AF-2; sequence PPPIVDKIFMDT.

Belongs to the nuclear hormone receptor family. NR4 subfamily. In terms of assembly, binds the NGFI-B response element (NBRE) as a monomer. Binds the Nur response element (NurRE), consisting of two inverse NBRE-related octanucleotide repeats separated by 6 base-pairs, as a dimer. Interacts (via N-terminus) with NLRP3 (via LRR repeat domain); the interaction is direct, requires binding of NR4A1/Nur77 to NBRE-containing dsDNA and lipopolysaccharide, and leads to non-canonical NLRP3 inflammasome activation. Interacts with GADD45GIP1. Interacts with STK11. Heterodimer (via DNA-binding domain) with RXRA (via C-terminus); DNA-binding of the heterodimer is enhanced by 9-cis retinoic acid. Competes for the RXRA interaction with EP300 and thereby attenuates EP300 mediated acetylation of RXRA. Interacts with NCOA1. Interacts with NCOA2. Interacts with NCOA3. Zn(2+) serves as cofactor. In terms of processing, phosphorylated at Ser-351 by RPS6KA1 and RPS6KA3 in response to mitogenic or stress stimuli. Post-translationally, acetylated by p300/CBP, acetylation increases stability. Deacetylated by HDAC1.

Its subcellular location is the cytoplasm. It is found in the cytosol. It localises to the nucleus. The protein resides in the mitochondrion. Orphan nuclear receptor. Binds the NGFI-B response element (NBRE) 5'-AAAGGTCA-3'. Binds 9-cis-retinoic acid outside of its ligand-binding (NR LBD) domain. Participates in energy homeostasis by sequestrating the kinase STK11 in the nucleus, thereby attenuating cytoplasmic AMPK activation. Regulates the inflammatory response in macrophages by regulating metabolic adaptations during inflammation, including repressing the transcription of genes involved in the citric acid cycle (TCA). Inhibits NF-kappa-B signaling by binding to low-affinity NF-kappa-B binding sites, such as at the IL2 promoter. May act concomitantly with NR4A2 in regulating the expression of delayed-early genes during liver regeneration. Plays a role in the vascular response to injury. Functionally, in the cytosol, upon its detection of both bacterial lipopolysaccharide (LPS) and NBRE-containing mitochondrial DNA released by GSDMD pores during pyroptosis, it promotes non-canonical NLRP3 inflammasome activation by stimulating association of NLRP3 and NEK7. The chain is Nuclear receptor subfamily 4 group A member 1 (NR4A1) from Canis lupus familiaris (Dog).